The primary structure comprises 214 residues: Probable chemoreceptor glutamine deamidase CheD (214 aa).

This sequence belongs to the CheD family.

The enzyme catalyses L-glutaminyl-[protein] + H2O = L-glutamyl-[protein] + NH4(+). Functionally, probably deamidates glutamine residues to glutamate on methyl-accepting chemotaxis receptors (MCPs), playing an important role in chemotaxis. The chain is Probable chemoreceptor glutamine deamidase CheD from Vibrio vulnificus (strain YJ016).